The primary structure comprises 98 residues: Small ribosomal subunit protein eS24 (98 aa).

This sequence belongs to the eukaryotic ribosomal protein eS24 family.

This Thermoplasma acidophilum (strain ATCC 25905 / DSM 1728 / JCM 9062 / NBRC 15155 / AMRC-C165) protein is Small ribosomal subunit protein eS24 (rps2e).